Consider the following 95-residue polypeptide: Homeotic protein bicoid (95 aa).

2 disordered regions span residues 1–29 (NLEP…STGM) and 42–63 (GKPS…MMHD).

Belongs to the paired homeobox family. Bicoid subfamily.

It localises to the nucleus. Functionally, bicoid is polarity protein that provides positional cues for the development of head and thoracic segments. BCD regulates the expression of zygotic genes, possibly through its homeodomain, and inhibits the activity of other maternal gene products. This Drosophila subobscura (Fruit fly) protein is Homeotic protein bicoid (bcd).